Reading from the N-terminus, the 691-residue chain is DNA ligase (691 aa).

NAD(+) is bound by residues 41–45, 90–91, and glutamate 130; these read DAEYD and SL. Residue lysine 132 is the N6-AMP-lysine intermediate of the active site. NAD(+) is bound by residues arginine 153, glutamate 190, lysine 307, and lysine 331. Positions 425, 428, 443, and 449 each coordinate Zn(2+). The BRCT domain occupies 610–691; it reads APQGVLAGKT…LHQLLEGNTP (82 aa).

The protein belongs to the NAD-dependent DNA ligase family. LigA subfamily. Mg(2+) is required as a cofactor. Mn(2+) serves as cofactor.

The enzyme catalyses NAD(+) + (deoxyribonucleotide)n-3'-hydroxyl + 5'-phospho-(deoxyribonucleotide)m = (deoxyribonucleotide)n+m + AMP + beta-nicotinamide D-nucleotide.. DNA ligase that catalyzes the formation of phosphodiester linkages between 5'-phosphoryl and 3'-hydroxyl groups in double-stranded DNA using NAD as a coenzyme and as the energy source for the reaction. It is essential for DNA replication and repair of damaged DNA. This chain is DNA ligase, found in Burkholderia lata (strain ATCC 17760 / DSM 23089 / LMG 22485 / NCIMB 9086 / R18194 / 383).